Consider the following 255-residue polypeptide: (R)-S-adenosyl-L-methionine hydrolase (255 aa).

The adenosine site is built by Asp-9, Asp-70, and Asn-186. Positions 186, 227, 232, and 235 each coordinate (R)-S-adenosyl-L-methionine. Adenosine is bound at residue Val-235.

This sequence belongs to the SAM hydrolase / SAM-dependent halogenase family. In terms of assembly, homotrimer.

The enzyme catalyses (R)-S-adenosyl-L-methionine + H2O = adenosine + L-methionine + H(+). Its function is as follows. Catalyzes the hydrolysis of S-adenosyl-L-methionine (SAM) into adenosine and L-methionine. Does not have chlorinase or fluorinase activity. The sequence is that of (R)-S-adenosyl-L-methionine hydrolase from Thermus thermophilus (strain ATCC 27634 / DSM 579 / HB8).